Consider the following 344-residue polypeptide: Phenylalanine--tRNA ligase alpha subunit (344 aa).

Residue Glu-269 participates in Mg(2+) binding.

The protein belongs to the class-II aminoacyl-tRNA synthetase family. Phe-tRNA synthetase alpha subunit type 1 subfamily. As to quaternary structure, tetramer of two alpha and two beta subunits. Requires Mg(2+) as cofactor.

The protein resides in the cytoplasm. It carries out the reaction tRNA(Phe) + L-phenylalanine + ATP = L-phenylalanyl-tRNA(Phe) + AMP + diphosphate + H(+). The chain is Phenylalanine--tRNA ligase alpha subunit from Ralstonia nicotianae (strain ATCC BAA-1114 / GMI1000) (Ralstonia solanacearum).